A 325-amino-acid chain; its full sequence is tRNA U34 carboxymethyltransferase (325 aa).

Carboxy-S-adenosyl-L-methionine-binding positions include lysine 91, tryptophan 105, lysine 110, glycine 130, 152–154 (DPS), methionine 196, tyrosine 200, and arginine 315.

This sequence belongs to the class I-like SAM-binding methyltransferase superfamily. CmoB family. In terms of assembly, homotetramer.

The catalysed reaction is carboxy-S-adenosyl-L-methionine + 5-hydroxyuridine(34) in tRNA = 5-carboxymethoxyuridine(34) in tRNA + S-adenosyl-L-homocysteine + H(+). Its function is as follows. Catalyzes carboxymethyl transfer from carboxy-S-adenosyl-L-methionine (Cx-SAM) to 5-hydroxyuridine (ho5U) to form 5-carboxymethoxyuridine (cmo5U) at position 34 in tRNAs. The chain is tRNA U34 carboxymethyltransferase from Aeromonas salmonicida (strain A449).